A 460-amino-acid chain; its full sequence is Inner membrane symporter YicJ (460 aa).

Over 1–11 the chain is Periplasmic; that stretch reads MKSEVLSVKEK. A run of 2 helical transmembrane segments spans residues 12–32 and 33–53; these read IGYGMGDAASHIIFDNVMLYM and MFFYTDIFGIPAGFVGTMFLV. Residues 54–80 are Periplasmic-facing; sequence ARALDAISDPCMGLLADRTRSRWGKFR. A helical transmembrane segment spans residues 81 to 101; sequence PWVLFGALPFGIVCVLAYSTP. Over 102–116 the chain is Cytoplasmic; the sequence is DLSMNGKMIYAAITY. Residues 117-137 form a helical membrane-spanning segment; the sequence is TLLTLLYTVVNIPYCALGGVI. Residues 138-152 are Periplasmic-facing; the sequence is TNDPTQRISLQSWRF. A helical membrane pass occupies residues 153-173; that stretch reads VLATAGGMLSTVLMMPLVNLI. Residues 174-181 lie on the Cytoplasmic side of the membrane; it reads GGDNKPLG. Residues 182–202 traverse the membrane as a helical segment; it reads FQGGIAVLSVVAFMMLAFCFF. The Periplasmic portion of the chain corresponds to 203–248; sequence TTKERVEAPPTTTSMREDLRDIWQNDQWRIVGLLTIFNILAVCVRG. A helical membrane pass occupies residues 249 to 269; it reads GAMMYYVTWILGTPEVFVAFL. Residues 270-288 lie on the Cytoplasmic side of the membrane; sequence TTYCVGNLIGSALAKPLTD. A helical transmembrane segment spans residues 289–309; it reads WKCKVTIFWWTNALLAVISLA. Position 310 (Met-310) is a topological domain, periplasmic. The chain crosses the membrane as a helical span at residues 311 to 331; the sequence is FFVPMQASITMFVFIFVIGVL. Topologically, residues 332–366 are cytoplasmic; sequence HQLVTPIQWVMMSDTVDYGEWCNGKRLTGISFAGT. Residues 367 to 387 traverse the membrane as a helical segment; sequence LFVLKLGLAFGGALIGWMLAY. Over 388 to 403 the chain is Periplasmic; it reads GGYDAAEKAQNSATIS. A helical membrane pass occupies residues 404-424; the sequence is IIIALFTIVPAICYLLSAIIA. Residues 425–460 lie on the Cytoplasmic side of the membrane; the sequence is KRYYSLTTHNLKTVMEQLAQGKRRCQQQFTSQEVQN.

Belongs to the sodium:galactoside symporter (TC 2.A.2) family.

The protein resides in the cell inner membrane. This is Inner membrane symporter YicJ (yicJ) from Escherichia coli (strain K12).